The primary structure comprises 103 residues: Protamine-2 (103 aa).

The interval 1–103 (MVRYRMRSLS…RTRRRRCRRH (103 aa)) is disordered. Phosphoserine occurs at positions 8 and 10. Residues 8–17 (SLSERPHEVH) show a composition bias toward basic and acidic residues. Residues 18–29 (GQQVHGQDQGHN) are compositionally biased toward low complexity. A compositionally biased stretch (basic residues) spans 48–103 (HRGHSHHRRRRCSRRRLHRIHRRRHRSCRRRRRRSCRHRRRHRRGCRTRRRRCRRH).

The protein belongs to the protamine P2 family. Interacts with TDRP. Post-translationally, proteolytic processing into mature chains is required for histone eviction during spermatogenesis. Transition proteins (TNP1 and TNP2) are required for processing. In terms of tissue distribution, testis.

The protein resides in the nucleus. The protein localises to the chromosome. Its function is as follows. Protamines substitute for histones in the chromatin of sperm during the haploid phase of spermatogenesis. They compact sperm DNA into a highly condensed, stable and inactive complex. This chain is Protamine-2 (PRM2), found in Macaca nemestrina (Pig-tailed macaque).